Consider the following 315-residue polypeptide: Glutaminase (315 aa).

Residues Ser-70, Asn-120, Glu-166, Asn-173, Tyr-197, Tyr-249, and Val-267 each contribute to the substrate site.

This sequence belongs to the glutaminase family. In terms of assembly, homotetramer.

It catalyses the reaction L-glutamine + H2O = L-glutamate + NH4(+). This Mesorhizobium japonicum (strain LMG 29417 / CECT 9101 / MAFF 303099) (Mesorhizobium loti (strain MAFF 303099)) protein is Glutaminase.